The sequence spans 166 residues: PTS system glucose-specific EIIA component (166 aa).

The 105-residue stretch at aspartate 34–asparagine 138 folds into the PTS EIIA type-1 domain. Residues histidine 71 and histidine 86 each coordinate Zn(2+). Histidine 86 (tele-phosphohistidine intermediate; for EIIA activity) is an active-site residue. A Phosphohistidine; by HPr modification is found at histidine 86.

Heterodimer with glycerol kinase (glpk). The cofactor is Zn(2+).

It localises to the cytoplasm. The phosphoenolpyruvate-dependent sugar phosphotransferase system (sugar PTS), a major carbohydrate active transport system, catalyzes the phosphorylation of incoming sugar substrates concomitantly with their translocation across the cell membrane. The enzyme II complex composed of PtsG and Crr is involved in glucose transport. This Staphylococcus aureus (strain MRSA252) protein is PTS system glucose-specific EIIA component (crr).